The primary structure comprises 336 residues: UDP-N-acetylenolpyruvoylglucosamine reductase (336 aa).

Positions 17 to 188 (LRSLAERFVE…WDVTFRLPKK (172 aa)) constitute an FAD-binding PCMH-type domain. Residue arginine 164 is part of the active site. Catalysis depends on serine 237, which acts as the Proton donor. Glutamate 332 is an active-site residue.

Belongs to the MurB family. Requires FAD as cofactor.

The protein localises to the cytoplasm. It catalyses the reaction UDP-N-acetyl-alpha-D-muramate + NADP(+) = UDP-N-acetyl-3-O-(1-carboxyvinyl)-alpha-D-glucosamine + NADPH + H(+). Its pathway is cell wall biogenesis; peptidoglycan biosynthesis. Cell wall formation. The sequence is that of UDP-N-acetylenolpyruvoylglucosamine reductase from Bdellovibrio bacteriovorus (strain ATCC 15356 / DSM 50701 / NCIMB 9529 / HD100).